A 365-amino-acid chain; its full sequence is Tetraacyldisaccharide 4'-kinase (365 aa).

Residue 68-75 (VVGGAGKT) participates in ATP binding.

Belongs to the LpxK family.

The enzyme catalyses a lipid A disaccharide + ATP = a lipid IVA + ADP + H(+). Its pathway is glycolipid biosynthesis; lipid IV(A) biosynthesis; lipid IV(A) from (3R)-3-hydroxytetradecanoyl-[acyl-carrier-protein] and UDP-N-acetyl-alpha-D-glucosamine: step 6/6. Its function is as follows. Transfers the gamma-phosphate of ATP to the 4'-position of a tetraacyldisaccharide 1-phosphate intermediate (termed DS-1-P) to form tetraacyldisaccharide 1,4'-bis-phosphate (lipid IVA). In Chlamydia pneumoniae (Chlamydophila pneumoniae), this protein is Tetraacyldisaccharide 4'-kinase.